Here is a 384-residue protein sequence, read N- to C-terminus: Putative ankyrin repeat protein L72 (384 aa).

ANK repeat units lie at residues 88–117 (ADMC…NIKN), 119–146 (GNLL…KEFS), 171–200 (DHNV…ILSV), 202–231 (DDSL…DIES), 233–261 (NNYC…NPNN), 298–324 (ILYQ…AGIK), and 325–357 (PTNS…DINV).

The chain is Putative ankyrin repeat protein L72 from Acanthamoeba polyphaga (Amoeba).